We begin with the raw amino-acid sequence, 700 residues long: Polyribonucleotide nucleotidyltransferase (700 aa).

Residues Asp484 and Asp490 each contribute to the Mg(2+) site. Positions 551-610 (PRVIRMVVDPEKIREIIGPGGKTISKIIAETGVKIDIEEDGRLYITASDLRSGERAKQMI) constitute a KH domain. An S1 motif domain is found at 620 to 688 (GEIYLGKVLR…KLGRISLSRK (69 aa)).

The protein belongs to the polyribonucleotide nucleotidyltransferase family. Mg(2+) serves as cofactor.

The protein resides in the cytoplasm. The enzyme catalyses RNA(n+1) + phosphate = RNA(n) + a ribonucleoside 5'-diphosphate. Involved in mRNA degradation. Catalyzes the phosphorolysis of single-stranded polyribonucleotides processively in the 3'- to 5'-direction. In Thermoanaerobacter sp. (strain X514), this protein is Polyribonucleotide nucleotidyltransferase.